Consider the following 351-residue polypeptide: MDLVLEFCDSYFFDYVYATLLPASLSPKMGGTWQQAMIKEQMVNATRVFGRSLERPLEVYGYAPFMFEVSPHAFGSVLPRYSLLRQSLSLFLVTTVFGWLLYLIVASFSYVFVFDKSVFNHPRYLKNQMSMEIKQGLGAIPYMAVMTVPWFLLELHGYSHLYMGLELNVRGYVRLALEALFFILFTDFGIYLLHRWLHWPAVYKVLHKKHHKWLVCTPFASHAFHPIDGYLQSLPYHLFPMLFPLHKVSYLVLFTFVNVWTVMIHDGEYLSNDPVINGAACHTVHHLYFNYNYGQFTTLWDRLGGSYREPDHELFDSNLKKDKAVWEQQIKEVDEMIKNVEGPADDRVYER.

3 helical membrane-spanning segments follow: residues 88–108 (LSLFLVTTVFGWLLYLIVASF), 136–156 (GLGAIPYMAVMTVPWFLLELH), and 173–193 (VRLALEALFFILFTDFGIYLL). The region spanning 180–305 (LFFILFTDFG…FTTLWDRLGG (126 aa)) is the Fatty acid hydroxylase domain. Residues 194–198 (HRWLH) carry the Histidine box-1 motif. Residues 207-211 (HKKHH) carry the Histidine box-2 motif. A helical transmembrane segment spans residues 237–257 (HLFPMLFPLHKVSYLVLFTFV). The Histidine box-3 signature appears at 282–286 (HTVHH).

The protein belongs to the sterol desaturase family. The cofactor is Fe cation.

Its subcellular location is the endoplasmic reticulum membrane. It carries out the reaction a Delta(7)-sterol + 2 Fe(II)-[cytochrome b5] + O2 + 2 H(+) = a Delta(5),Delta(7)-sterol + 2 Fe(III)-[cytochrome b5] + 2 H2O. The protein operates within steroid metabolism; ergosterol biosynthesis; ergosterol from zymosterol: step 3/5. Catalyzes the introduction of a C-5 double bond in the B ring of ergosterol. May contribute to the regulation of ergosterol biosynthesis. This is Delta(7)-sterol 5(6)-desaturase (ERG3) from Eremothecium gossypii (strain ATCC 10895 / CBS 109.51 / FGSC 9923 / NRRL Y-1056) (Yeast).